Here is a 342-residue protein sequence, read N- to C-terminus: MKALAKLERGPGLTLTRVKRPEVGHNDVLIKIHRTAICGTDIHIWKWDDWAQKTIPVPMHVGHEYVGEIVEMGQEVRGFAIGDRVSGEGHITCGFCRNCRAGRRHLCRNTVGVGVNREGAFAEYLAIPAFNAFKIPPEISDDLASIFDPFGNATHTALSFNLVGEDVLITGAGPIGVMAAAIAKHVGARNVVITDINDYRLELARKMGATRAVNVSRESLRDVMADLHMTEGFDVGLEMSGVPSAFTSMLEAMNHGGKIALLGIPPAQTAIDWNQVIFKGLEIKGIYGREMFETWYKMVAMLQSGLDLSPIITHRFAADDYEKGFAAMLSGESGKVILDWTV.

C38 lines the Zn(2+) pocket. Catalysis depends on charge relay system residues T40 and H43. Zn(2+)-binding residues include H63, E64, C93, C96, C99, and C107. NAD(+)-binding positions include I175, D195, R200, L262–I264, and I286–Y287.

The protein belongs to the zinc-containing alcohol dehydrogenase family. Homotetramer. Zn(2+) serves as cofactor.

It localises to the cytoplasm. It carries out the reaction L-threonine + NAD(+) = (2S)-2-amino-3-oxobutanoate + NADH + H(+). The protein operates within amino-acid degradation; L-threonine degradation via oxydo-reductase pathway; glycine from L-threonine: step 1/2. Its function is as follows. Catalyzes the NAD(+)-dependent oxidation of L-threonine to 2-amino-3-ketobutyrate. This is L-threonine 3-dehydrogenase from Burkholderia ambifaria (strain ATCC BAA-244 / DSM 16087 / CCUG 44356 / LMG 19182 / AMMD) (Burkholderia cepacia (strain AMMD)).